We begin with the raw amino-acid sequence, 39 residues long: Photosystem II reaction center protein J (39 aa).

The chain crosses the membrane as a helical span at residues Leu-9–Tyr-29.

This sequence belongs to the PsbJ family. In terms of assembly, PSII is composed of 1 copy each of membrane proteins PsbA, PsbB, PsbC, PsbD, PsbE, PsbF, PsbH, PsbI, PsbJ, PsbK, PsbL, PsbM, PsbT, PsbX, PsbY, PsbZ, Psb30/Ycf12, at least 3 peripheral proteins of the oxygen-evolving complex and a large number of cofactors. It forms dimeric complexes.

The protein resides in the plastid. Its subcellular location is the chloroplast thylakoid membrane. One of the components of the core complex of photosystem II (PSII). PSII is a light-driven water:plastoquinone oxidoreductase that uses light energy to abstract electrons from H(2)O, generating O(2) and a proton gradient subsequently used for ATP formation. It consists of a core antenna complex that captures photons, and an electron transfer chain that converts photonic excitation into a charge separation. In Porphyra purpurea (Red seaweed), this protein is Photosystem II reaction center protein J.